Here is a 155-residue protein sequence, read N- to C-terminus: Ribosomal RNA large subunit methyltransferase H (155 aa).

Residues Gly-104 and 123-128 (LSAMTF) each bind S-adenosyl-L-methionine.

This sequence belongs to the RNA methyltransferase RlmH family. In terms of assembly, homodimer.

Its subcellular location is the cytoplasm. It carries out the reaction pseudouridine(1915) in 23S rRNA + S-adenosyl-L-methionine = N(3)-methylpseudouridine(1915) in 23S rRNA + S-adenosyl-L-homocysteine + H(+). In terms of biological role, specifically methylates the pseudouridine at position 1915 (m3Psi1915) in 23S rRNA. This chain is Ribosomal RNA large subunit methyltransferase H, found in Oleidesulfovibrio alaskensis (strain ATCC BAA-1058 / DSM 17464 / G20) (Desulfovibrio alaskensis).